A 193-amino-acid chain; its full sequence is MTVTPINPTNQPYKYVFVVIGPAGSGKTTMAKAVSEKLGFEYIEGDDLHPKANIEKMSQGHPLNDNDRWGWLHNCGGACAMELDKESIKGVVLTCSALKRSYRDILRSSLEHRPAILRFIYLAASRETLIKRTTSRKNHYMKADMVESQLAILEAPTADEKDVITISVENGKEQSEEECLDIVHKMVNENKQP.

21 to 28 contacts ATP; the sequence is GPAGSGKT.

It belongs to the gluconokinase GntK/GntV family.

It carries out the reaction D-gluconate + ATP = 6-phospho-D-gluconate + ADP + H(+). It functions in the pathway carbohydrate acid metabolism; D-gluconate degradation. The polypeptide is Probable gluconokinase (Schizosaccharomyces pombe (strain 972 / ATCC 24843) (Fission yeast)).